The following is a 509-amino-acid chain: Maturase K (509 aa).

It belongs to the intron maturase 2 family. MatK subfamily.

It is found in the plastid. It localises to the chloroplast. Functionally, usually encoded in the trnK tRNA gene intron. Probably assists in splicing its own and other chloroplast group II introns. This is Maturase K from Nicotiana rustica (Aztec tobacco).